A 539-amino-acid polypeptide reads, in one-letter code: 3-hydroxy-3-methylglutaryl-coenzyme A reductase 1 (539 aa).

The chain crosses the membrane as a helical span at residues 63-83 (FATVVCQLASVVYLLSLFAHP). The tract at residues 84 to 124 (DAPATTTGDDDDGQGGSRRARPAAAEPAPMHGHGGGMMEAD) is linker. A disordered region spans residues 87-116 (ATTTGDDDDGQGGSRRARPAAAEPAPMHGH). Over residues 105-114 (PAAAEPAPMH) the composition is skewed to low complexity. The tract at residues 125–539 (DEEIVAAVAS…SSKDVAKAAS (415 aa)) is catalytic. Glutamate 218 (charge relay system) is an active-site residue. Asparagine 282 is a glycosylation site (N-linked (GlcNAc...) asparagine). Catalysis depends on charge relay system residues lysine 350 and aspartate 426. Residues 496 to 516 (LATIVAGSVLAGELSLLAALA) traverse the membrane as a helical segment. The Proton donor role is filled by histidine 524. Asparagine 528 carries N-linked (GlcNAc...) asparagine glycosylation.

It belongs to the HMG-CoA reductase family.

It localises to the endoplasmic reticulum membrane. The enzyme catalyses (R)-mevalonate + 2 NADP(+) + CoA = (3S)-3-hydroxy-3-methylglutaryl-CoA + 2 NADPH + 2 H(+). The protein operates within metabolic intermediate biosynthesis; (R)-mevalonate biosynthesis; (R)-mevalonate from acetyl-CoA: step 3/3. In terms of biological role, catalyzes the synthesis of mevalonate. The specific precursor of all isoprenoid compounds present in plants. The sequence is that of 3-hydroxy-3-methylglutaryl-coenzyme A reductase 1 (HMG1) from Oryza sativa subsp. indica (Rice).